The following is a 257-amino-acid chain: Imidazole glycerol phosphate synthase subunit HisF (257 aa).

Residues D11 and D130 contribute to the active site.

The protein belongs to the HisA/HisF family. As to quaternary structure, heterodimer of HisH and HisF.

The protein resides in the cytoplasm. It catalyses the reaction 5-[(5-phospho-1-deoxy-D-ribulos-1-ylimino)methylamino]-1-(5-phospho-beta-D-ribosyl)imidazole-4-carboxamide + L-glutamine = D-erythro-1-(imidazol-4-yl)glycerol 3-phosphate + 5-amino-1-(5-phospho-beta-D-ribosyl)imidazole-4-carboxamide + L-glutamate + H(+). It participates in amino-acid biosynthesis; L-histidine biosynthesis; L-histidine from 5-phospho-alpha-D-ribose 1-diphosphate: step 5/9. In terms of biological role, IGPS catalyzes the conversion of PRFAR and glutamine to IGP, AICAR and glutamate. The HisF subunit catalyzes the cyclization activity that produces IGP and AICAR from PRFAR using the ammonia provided by the HisH subunit. This Pseudoalteromonas translucida (strain TAC 125) protein is Imidazole glycerol phosphate synthase subunit HisF.